The sequence spans 286 residues: Mitochondrial dicarboxylate carrier (286 aa).

3 Solcar repeats span residues 7–87, 100–187, and 196–279; these read SRWY…MRDY, SKVL…AKQL, and DNIF…LRKH. 3 helical membrane-spanning segments follow: residues 9 to 29, 62 to 81, and 102 to 122; these read WYFGGLASCGAACCTHPLDLL, GLSASLCRQMTYSLTRFAIY, and VLLGGISGLTGGFVGTPADLV. Lys158 is subject to N6-acetyllysine. 3 consecutive transmembrane segments (helical) span residues 162 to 181, 202 to 222, and 254 to 274; these read GATMASSRGALVTVGQLSCY, FLSSFIAGGCATFLCQPLDVL, and GLVPAGVRLVPHTVLTFMFLE.

This sequence belongs to the mitochondrial carrier (TC 2.A.29) family. As to expression, expressed most strongly in liver, then kidney, and at lower levels in heart and brain.

Its subcellular location is the mitochondrion inner membrane. The enzyme catalyses (S)-malate(in) + phosphate(out) = (S)-malate(out) + phosphate(in). The catalysed reaction is malonate(out) + (S)-malate(in) = malonate(in) + (S)-malate(out). It catalyses the reaction (S)-malate(in) + succinate(out) = (S)-malate(out) + succinate(in). It carries out the reaction (S)-malate(in) + sulfate(out) = (S)-malate(out) + sulfate(in). The enzyme catalyses malonate(out) + phosphate(in) = malonate(in) + phosphate(out). The catalysed reaction is succinate(out) + phosphate(in) = succinate(in) + phosphate(out). It catalyses the reaction sulfate(out) + phosphate(in) = sulfate(in) + phosphate(out). It carries out the reaction malonate(out) + succinate(in) = malonate(in) + succinate(out). In terms of biological role, catalyzes the electroneutral exchange or flux of physiologically important metabolites such as dicarboxylates (malonate, malate, succinate), inorganic sulfur-containing anions, and phosphate, across mitochondrial inner membrane. Plays an important role in gluconeogenesis, fatty acid metabolism, urea synthesis, and sulfur metabolism, particularly in liver, by supplying the substrates for the different metabolic processes. Regulates fatty acid release from adipocytes, and contributes to systemic insulin sensitivity. The protein is Mitochondrial dicarboxylate carrier of Rattus norvegicus (Rat).